The sequence spans 594 residues: Adenine deaminase 1 (594 aa).

Belongs to the metallo-dependent hydrolases superfamily. Adenine deaminase family. The cofactor is Mn(2+).

The enzyme catalyses adenine + H2O + H(+) = hypoxanthine + NH4(+). This is Adenine deaminase 1 from Desulfotalea psychrophila (strain LSv54 / DSM 12343).